The following is a 336-amino-acid chain: tRNA N6-adenosine threonylcarbamoyltransferase (336 aa).

Residues H112 and H116 each contribute to the Fe cation site. Substrate-binding positions include 136 to 140, D169, G182, and N276; that span reads LVSGG. D304 contacts Fe cation.

This sequence belongs to the KAE1 / TsaD family. Fe(2+) serves as cofactor.

The protein localises to the cytoplasm. It carries out the reaction L-threonylcarbamoyladenylate + adenosine(37) in tRNA = N(6)-L-threonylcarbamoyladenosine(37) in tRNA + AMP + H(+). In terms of biological role, required for the formation of a threonylcarbamoyl group on adenosine at position 37 (t(6)A37) in tRNAs that read codons beginning with adenine. Is involved in the transfer of the threonylcarbamoyl moiety of threonylcarbamoyl-AMP (TC-AMP) to the N6 group of A37, together with TsaE and TsaB. TsaD likely plays a direct catalytic role in this reaction. The polypeptide is tRNA N6-adenosine threonylcarbamoyltransferase (Francisella tularensis subsp. holarctica (strain FTNF002-00 / FTA)).